Consider the following 668-residue polypeptide: UvrABC system protein B (668 aa).

A Helicase ATP-binding domain is found at 25-413; that stretch reads NGINTGLQHQ…QNTVQQVIRP (389 aa). 38–45 serves as a coordination point for ATP; sequence GVTGSGKT. Residues 91 to 114 carry the Beta-hairpin motif; sequence YYDYYQPEAYIAASDTYIEKDSSV. Residues 429 to 595 form the Helicase C-terminal domain; sequence QVEDALSEIN…TIIKNIDDML (167 aa). In terms of domain architecture, UVR spans 629–664; the sequence is TKVIKALEKRMRAYAKELEFEKATTIRDKITEVKQK.

The protein belongs to the UvrB family. In terms of assembly, forms a heterotetramer with UvrA during the search for lesions. Interacts with UvrC in an incision complex.

Its subcellular location is the cytoplasm. Its function is as follows. The UvrABC repair system catalyzes the recognition and processing of DNA lesions. A damage recognition complex composed of 2 UvrA and 2 UvrB subunits scans DNA for abnormalities. Upon binding of the UvrA(2)B(2) complex to a putative damaged site, the DNA wraps around one UvrB monomer. DNA wrap is dependent on ATP binding by UvrB and probably causes local melting of the DNA helix, facilitating insertion of UvrB beta-hairpin between the DNA strands. Then UvrB probes one DNA strand for the presence of a lesion. If a lesion is found the UvrA subunits dissociate and the UvrB-DNA preincision complex is formed. This complex is subsequently bound by UvrC and the second UvrB is released. If no lesion is found, the DNA wraps around the other UvrB subunit that will check the other stand for damage. This Francisella tularensis subsp. tularensis (strain SCHU S4 / Schu 4) protein is UvrABC system protein B.